Reading from the N-terminus, the 251-residue chain is MIRQLWTELNAAILFYTVLPLPQRWPTQFAGMSRWAPIVGLILGLILAVSDRLLAVGQFPLPLRSLLIVLLAIALTGGLHLDGAMDTADGLAVPNPDRRLEVMSDSHTGAFGAIAAIAIISLKTIALCYLPAPRSLLILLIPVWGRWAQVLAIVRYPYLKAEGKGAIHKQTGRGAIDLLPGAIALVLGIGAIARFHSLTVALQLLAIGLLWAWATGAWLQKKLGGQTGDTYGAIVEWTEALIWVSFTIGQV.

The next 6 helical transmembrane spans lie at F29 to V49, S65 to M85, A110 to L130, L136 to Y156, A175 to F195, and L198 to W218.

This sequence belongs to the CobS family. Requires Mg(2+) as cofactor.

The protein localises to the cell inner membrane. It catalyses the reaction alpha-ribazole + adenosylcob(III)inamide-GDP = adenosylcob(III)alamin + GMP + H(+). It carries out the reaction alpha-ribazole 5'-phosphate + adenosylcob(III)inamide-GDP = adenosylcob(III)alamin 5'-phosphate + GMP + H(+). It participates in cofactor biosynthesis; adenosylcobalamin biosynthesis; adenosylcobalamin from cob(II)yrinate a,c-diamide: step 7/7. Functionally, joins adenosylcobinamide-GDP and alpha-ribazole to generate adenosylcobalamin (Ado-cobalamin). Also synthesizes adenosylcobalamin 5'-phosphate from adenosylcobinamide-GDP and alpha-ribazole 5'-phosphate. The chain is Adenosylcobinamide-GDP ribazoletransferase from Synechococcus elongatus (strain ATCC 33912 / PCC 7942 / FACHB-805) (Anacystis nidulans R2).